Here is a 143-residue protein sequence, read N- to C-terminus: Small ribosomal subunit protein bS6 (143 aa).

Positions 100–143 are disordered; sequence QSFIMKSKDDKGDKPERRRRDDDESGDVGVSNDSDNDGGNAEAA. Residues 105-121 show a composition bias toward basic and acidic residues; it reads KSKDDKGDKPERRRRDD. A compositionally biased stretch (low complexity) spans 126–143; that stretch reads DVGVSNDSDNDGGNAEAA.

This sequence belongs to the bacterial ribosomal protein bS6 family.

In terms of biological role, binds together with bS18 to 16S ribosomal RNA. In Xylella fastidiosa (strain M12), this protein is Small ribosomal subunit protein bS6.